The sequence spans 314 residues: Homoserine O-acetyltransferase (314 aa).

Residue cysteine 142 is the Acyl-thioester intermediate of the active site. Substrate is bound by residues lysine 163 and serine 192. Histidine 235 (proton acceptor) is an active-site residue. Glutamate 237 is a catalytic residue. Substrate is bound at residue arginine 249.

It belongs to the MetA family.

The protein localises to the cytoplasm. It catalyses the reaction L-homoserine + acetyl-CoA = O-acetyl-L-homoserine + CoA. Its pathway is amino-acid biosynthesis; L-methionine biosynthesis via de novo pathway; O-acetyl-L-homoserine from L-homoserine: step 1/1. Functionally, transfers an acetyl group from acetyl-CoA to L-homoserine, forming acetyl-L-homoserine. The chain is Homoserine O-acetyltransferase from Streptococcus pneumoniae serotype 19F (strain G54).